The following is a 342-amino-acid chain: N-acetyl-gamma-glutamyl-phosphate reductase (342 aa).

Residue Cys146 is part of the active site.

The protein belongs to the NAGSA dehydrogenase family. Type 1 subfamily.

The protein resides in the cytoplasm. The catalysed reaction is N-acetyl-L-glutamate 5-semialdehyde + phosphate + NADP(+) = N-acetyl-L-glutamyl 5-phosphate + NADPH + H(+). The protein operates within amino-acid biosynthesis; L-arginine biosynthesis; N(2)-acetyl-L-ornithine from L-glutamate: step 3/4. In terms of biological role, catalyzes the NADPH-dependent reduction of N-acetyl-5-glutamyl phosphate to yield N-acetyl-L-glutamate 5-semialdehyde. This Frankia casuarinae (strain DSM 45818 / CECT 9043 / HFP020203 / CcI3) protein is N-acetyl-gamma-glutamyl-phosphate reductase.